The primary structure comprises 163 residues: MIGLLLGLIYYIPALVANGSAPFIKSGTPIDFKRKLNDGRRVLGDGKTFEGLLLSLTFGTTVGAIISRFLGIEWIIIGFVESLGAMLGDMLGAFIKRRIGLERGARAPILDQLDFILGATVVLISFNVNLNIYQVVFVCVLVIALHMFTNYVAYRLKIKSVPW.

Transmembrane regions (helical) follow at residues Leu-4 to Ile-24, Leu-52 to Ile-72, Ile-75 to Ile-95, Ala-107 to Asn-127, and Val-128 to Phe-148.

It belongs to the CDP-archaeol synthase family. Mg(2+) serves as cofactor.

It is found in the cell membrane. The catalysed reaction is 2,3-bis-O-(geranylgeranyl)-sn-glycerol 1-phosphate + CTP + H(+) = CDP-2,3-bis-O-(geranylgeranyl)-sn-glycerol + diphosphate. It functions in the pathway membrane lipid metabolism; glycerophospholipid metabolism. Its function is as follows. Catalyzes the formation of CDP-2,3-bis-(O-geranylgeranyl)-sn-glycerol (CDP-archaeol) from 2,3-bis-(O-geranylgeranyl)-sn-glycerol 1-phosphate (DGGGP) and CTP. This reaction is the third ether-bond-formation step in the biosynthesis of archaeal membrane lipids. This Sulfolobus acidocaldarius (strain ATCC 33909 / DSM 639 / JCM 8929 / NBRC 15157 / NCIMB 11770) protein is CDP-archaeol synthase.